A 125-amino-acid polypeptide reads, in one-letter code: MAISKEEVLEYIGSLSVLELSELVKMFEKKFGVSATPTVVAGAAVAGGAAAESEEKTEFNVILADSGAEKIKVIKVVREITGLGLKEAKDATEKTPHVLKEGVNKEEAETIKKKLEEVGAKVEVK.

The protein belongs to the bacterial ribosomal protein bL12 family. As to quaternary structure, homodimer. Part of the ribosomal stalk of the 50S ribosomal subunit. Forms a multimeric L10(L12)X complex, where L10 forms an elongated spine to which 2 to 4 L12 dimers bind in a sequential fashion. Binds GTP-bound translation factors.

Functionally, forms part of the ribosomal stalk which helps the ribosome interact with GTP-bound translation factors. Is thus essential for accurate translation. This Helicobacter pylori (strain ATCC 700392 / 26695) (Campylobacter pylori) protein is Large ribosomal subunit protein bL12.